The sequence spans 324 residues: HTH-type transcriptional regulator CysB (324 aa).

In terms of domain architecture, HTH lysR-type spans 1-59 (MKLQQLRYIVEVVNHNLNVSSTAEGLYTSQPGISKQVRMLEDELGIQIFSRSGKHLTQV). Positions 19-38 (VSSTAEGLYTSQPGISKQVR) form a DNA-binding region, H-T-H motif.

The protein belongs to the LysR transcriptional regulatory family. In terms of assembly, homotetramer.

It localises to the cytoplasm. Its function is as follows. This protein is a positive regulator of gene expression for the cysteine regulon. The inducer for CysB is N-acetylserine. The protein is HTH-type transcriptional regulator CysB (cysB) of Escherichia coli O157:H7.